Consider the following 97-residue polypeptide: Protein RnfH (97 aa).

The protein belongs to the UPF0125 (RnfH) family.

This chain is Protein RnfH, found in Paramagnetospirillum magneticum (strain ATCC 700264 / AMB-1) (Magnetospirillum magneticum).